A 1358-amino-acid polypeptide reads, in one-letter code: DNA-directed RNA polymerase subunit beta (1358 aa).

It belongs to the RNA polymerase beta chain family. As to quaternary structure, the RNAP catalytic core consists of 2 alpha, 1 beta, 1 beta' and 1 omega subunit. When a sigma factor is associated with the core the holoenzyme is formed, which can initiate transcription.

The catalysed reaction is RNA(n) + a ribonucleoside 5'-triphosphate = RNA(n+1) + diphosphate. DNA-dependent RNA polymerase catalyzes the transcription of DNA into RNA using the four ribonucleoside triphosphates as substrates. This chain is DNA-directed RNA polymerase subunit beta, found in Azotobacter vinelandii (strain DJ / ATCC BAA-1303).